Consider the following 202-residue polypeptide: Neurensin-2 (202 aa).

Transmembrane regions (helical) follow at residues 65–85 (VAVA…GYAV) and 116–136 (VVGA…LFLI). A disordered region spans residues 162–202 (RDEPEKLSPAFHETSSQSPFLTPPSPFGQQSVQTSQPQRDL). Residues 188-202 (FGQQSVQTSQPQRDL) show a composition bias toward polar residues.

Belongs to the VMP family. Expressed specifically in brain where it is widely expressed, with highest levels of expression in thalamus and hypothalamus. In brain, found in neural cell bodies and detected in many regions of the limbic system, such as the septum nucleus, horizontal and vertical limbs of the diagonal band, hippocampus, amygdaloid nucleus, and habernula nucleus. Also localizes to small vesicles found in the perinuclear region of Neuro2a and PC12 cells.

The protein localises to the membrane. Functionally, may play a role in maintenance and/or transport of vesicles. This chain is Neurensin-2, found in Mus musculus (Mouse).